A 249-amino-acid polypeptide reads, in one-letter code: uncharacterized protein (249 aa).

11-34 (IFGGRSQIGGELARRLAAGATMVL) provides a ligand contact to NADP(+). A substrate-binding site is contributed by S142. Y155 serves as the catalytic Proton acceptor.

It belongs to the short-chain dehydrogenases/reductases (SDR) family.

This is an uncharacterized protein from Mycobacterium tuberculosis (strain CDC 1551 / Oshkosh).